Consider the following 471-residue polypeptide: dTDP-4-dehydro-6-deoxy-alpha-D-glucopyranose 2,3-dehydratase (471 aa).

DTDP-4-dehydro-6-deoxy-alpha-D-glucose is bound by residues Trp67, 155–159, Ser193, Asn238, Trp288, Arg351, 367–369, 372–373, and 405–408; these read TRSNY, QCT, NY, and EGGR.

The protein belongs to the hexose 2,3-dehydratase family. In terms of assembly, homodimer.

It carries out the reaction dTDP-4-dehydro-6-deoxy-alpha-D-glucose = dTDP-3,4-didehydro-2,6-dideoxy-alpha-D-glucose + H2O. The protein operates within antibiotic biosynthesis. Involved in the biosynthesis of the 2,3,6-trideoxysugar L-epivancosamine, the terminal sugar added to the aglycone scaffold of chloroeremomycin, a member of the glycopeptide antibiotics vancomycin family. Catalyzes the removal of the hydroxyl group at position C-2 of the hexose ring of dTDP-4-dehydro-6-deoxy-alpha-D-glucopyranose, and the oxidation of the hydroxyl group at position C-3 to form a carbonyl functionality. The product of the reaction, dTDP-2,6-dideoxy-D-glycero-hex-2-enos-4-ulose, is a highly unstable diketosugar, which spontaneously forms dTDP-3,4-didehydro-2,6-dideoxy-alpha-D-glucose. The polypeptide is dTDP-4-dehydro-6-deoxy-alpha-D-glucopyranose 2,3-dehydratase (Amycolatopsis orientalis (Nocardia orientalis)).